Consider the following 379-residue polypeptide: MPHSSLHPSIPCPRGHGAQKAALVLLSACLVTLWGLGEPPEHTLRYLVLHLASLQLGLLLNGVCSLAEELRHIHSRYRGSYWRTVRACLGCPLRRGALLLLSIYFYYSLPNAVGPPFTWMLALLGLSQALNILLGLKGLAPAEISAVCEKGNFNVAHGLAWSYYIGYLRLILPELQARIRTYNQHYNNLLRGAVSQRLYILLPLDCGVPDNLSMADPNIRFLDKLPQQTGDHAGIKDRVYSNSIYELLENGQRAGTCVLEYATPLQTLFAMSQYSQAGFSREDRLEQAKLFCRTLEDILADAPESQNNCRLIAYQEPADDSSFSLSQEVLRHLRQEEKEEVTVGSLKTSAVPSTSTMSQEPELLISGMEKPLPLRTDFS.

The Cytoplasmic segment spans residues 1–17 (MPHSSLHPSIPCPRGHG). Residues 1–190 (MPHSSLHPSI…TYNQHYNNLL (190 aa)) form a mediates interaction with ZDHHC1 and ZDHHC11 region. The chain crosses the membrane as a helical span at residues 18-34 (AQKAALVLLSACLVTLW). Lys-20 is covalently cross-linked (Glycyl lysine isopeptide (Lys-Gly) (interchain with G-Cter in ubiquitin)). Over 35-44 (GLGEPPEHTL) the chain is Lumenal. Residues 45–69 (RYLVLHLASLQLGLLLNGVCSLAEE) traverse the membrane as a helical segment. Topologically, residues 70 to 91 (LRHIHSRYRGSYWRTVRACLGC) are cytoplasmic. Residues Cys-88 and Cys-91 are each lipidated (S-palmitoyl cysteine). The helical transmembrane segment at 92–106 (PLRRGALLLLSIYFY) threads the bilayer. The Lumenal segment spans residues 107 to 116 (YSLPNAVGPP). Residues 117-134 (FTWMLALLGLSQALNILL) form a helical membrane-spanning segment. The Cytoplasmic portion of the chain corresponds to 135–379 (GLKGLAPAEI…KPLPLRTDFS (245 aa)). Residue Lys-150 forms a Glycyl lysine isopeptide (Lys-Gly) (interchain with G-Cter in ubiquitin) linkage. The interval 153-340 (FNVAHGLAWS…RHLRQEEKEE (188 aa)) is cyclic dinucleotide-binding domain (CBD). 2',3'-cGAMP-binding residues include Ser-162 and Tyr-167. Positions 162 and 167 each coordinate 3',3'-c-di-GMP. A 2',3'-cUAMP-binding site is contributed by Tyr-167. Phosphothreonine is present on Thr-229. Lys-236 is covalently cross-linked (Glycyl lysine isopeptide (Lys-Gly) (interchain with G-Cter in ubiquitin)). A 2',3'-cGAMP-binding site is contributed by Arg-238. Arg-238 is a binding site for 2',3'-cUAMP. Residues 238–241 (RVYS) and Thr-263 each bind 3',3'-c-di-GMP. Ser-241 carries the phosphoserine modification. Thr-263 serves as a coordination point for 2',3'-cGAMP. Residue Thr-263 coordinates 2',3'-cUAMP. Residue Lys-338 forms a Glycyl lysine isopeptide (Lys-Gly) (interchain with G-Cter in SUMO) linkage. Positions 340 to 379 (EVTVGSLKTSAVPSTSTMSQEPELLISGMEKPLPLRTDFS) are C-terminal tail (CTT). A disordered region spans residues 341-370 (VTVGSLKTSAVPSTSTMSQEPELLISGMEK). Residues 345 to 359 (SLKTSAVPSTSTMSQ) show a composition bias toward polar residues. Thr-354 bears the Phosphothreonine mark. A Phosphoserine; by MAP3K7 modification is found at Ser-355. At Thr-356 the chain carries Phosphothreonine. Phosphoserine; by TBK1 occurs at positions 358 and 366. The pLxIS motif signature appears at 363–366 (LLIS).

It belongs to the STING family. As to quaternary structure, homodimer; forms a homodimer in absence of cyclic nucleotide (c-di-GMP or cGAMP); 'Lys-63'-linked ubiquitination at Lys-150 is required for homodimerization. Homotetramer; in presence of cyclic nucleotide (c-di-GMP or cGAMP), forms tetramers and higher-order oligomers through side-by-side packing. Interacts (when phosphorylated) with IRF3; following activation and phosphorylation on the pLxIS motif by TBK1, recruits IRF3. Interacts with RIGI, MAVS and SSR2. Interacts with RNF5 and TRIM56. Interacts with TBK1; when homodimer, leading to subsequent production of IFN-beta. Interacts with IFIT1 and IFIT2. Interacts with TRIM29; this interaction induces STING1 ubiquitination and subsequent degradation. Associates with the MHC-II complex. Interacts with STEEP1; interaction takes place upon cGAMP-activation and STING1 phosphorylation by MAP3K7/TAK1 and promotes STING1 translocation to COPII vesicles. Interacts with SEC24A, SEC24B, and SEC24C; promoting translocation to COPII vesicles. Interacts (when ubiquitinated) with SQSTM1; leading to relocalization to autophagosomes. Interacts with SURF4. Interacts with HNRNPA2B1. Interacts with ZDHHC1; ZDHHC1 constitutively interacts with STING1 and in presence of DNA viruses activates it by promoting its cGAMP-induced oligomerization and the recruitment of downstream signaling components. Interacts with ZDHHC11; in presence of DNA viruses promotes the recruitment of IRF3 to STING1. Interacts with TOMM70. Interacts with isoform IFI16-beta of IFI16. Interacts with TAB1; promoting recruitment of TAB1 to the endoplasmic reticulum membrane and subsequent activation of MAP3K7/TAK1. Interacts (via transmembrane domain) with TMEM203. Interacts with DDX41. Interacts with TMEM120A (via C-terminal domain); regulates the trafficking of STING1 from the ER to the ER-Golgi intermediate compartment to elicit antiviral effects. (Microbial infection) Interacts with human papillomavirus (HPV) protein E7. In terms of assembly, (Microbial infection) Interacts with adenovirus early E1A protein. As to quaternary structure, (Microbial infection) Interacts with herpes simplex virus 1 protein ICP34.5; this interaction inhibits the intracellular DNA sensing pathway. (Microbial infection) Interacts with Chikungunya virus non-structural protein 1; this interaction results in inhibition of cGAS-STING signaling and increased levels of palmitoylated nsP1 and protein stabilization. In terms of assembly, (Microbial infection) Interacts with human cytomegalovirus proteins UL94, UL42 and UL138; these interactions result in the inhibition of cGAS-STING signaling. As to quaternary structure, (Microbial infection) Interacts with varivella virus protein 39; this interaction results in the inhibition of cGAS-STING signaling. In terms of processing, phosphorylation by TBK1 leads to activation and production of IFN-beta. Following cyclic nucleotide (c-di-GMP or cGAMP)-binding, activation and translocation from the endoplasmic reticulum, STING1 is phosphorylated by TBK1 at Ser-366 in the pLxIS motif. The phosphorylated pLxIS motif constitutes an IRF3-binding motif, leading to recruitment of the transcription factor IRF3 to induce type-I interferons and other cytokines. The phosphorylated pLxIS motif facilitates SENP2 recruitment during late phase of viral infection. Phosphorylated on tyrosine residues upon MHC-II aggregation. Dephosphorylation by PPP6C leads to inactivation and decreased production of IFN-beta. Phosphorylation at Ser-358 is also required to activate IRF3. Phosphorylation at Ser-355 by MAP3K7/TAK1 facilitates its interaction with STEEP1, promoting STING1 translocation to COPII vesicles. Post-translationally, ubiquitinated. Ubiquitinated via 'Lys-63'-linked ubiquitin chains in response to double-stranded DNA treatment, leading to relocalization to autophagosomes and subsequent degradation; this process is dependent on SQSTM1. 'Lys-63'-linked ubiquitination mediated by TRIM56 at Lys-150 promotes homodimerization and recruitment of the antiviral kinase TBK1 and subsequent production of IFN-beta. 'Lys-48'-linked polyubiquitination at Lys-150 occurring after viral infection is mediated by RNF5 and leads to proteasomal degradation. 'Lys-11'-linked polyubiquitination at Lys-150 by RNF26 leads to stabilize STING1: it protects STING1 from RNF5-mediated 'Lys-48'-linked polyubiquitination. 'Lys-33'-linked and 'Lys-48'-linked deubiquitinated by USP20; leading to its stabilization and promotion of innate antiviral response. 'Lys-48'-linked deubiquitinated by USP44; leading to its stabilization and promotion of innate antiviral response. Deubiquitinated by USP13; leading to inhibition of innate antiviral response. 'Lys-63'-linked deubiquitinated by USP49; leading to inhibition of the subsequent recruitment of TBK1 to the signaling complex. 'Lys-63'-linked ubiquitination mediated by RNF39 promotes the activation of the cGAS-STING pathway. MARCHF5-mediated ubiquitination prevents the oxidation-induced polymer formation. (Microbial infection) Deubiquitinated by Epstein-Barr virus BPLF1 on both 'Lys-48' and 'Lys-63'-linked ubiquitin chains; leading to inhibition of cGAS-STING signaling. In terms of processing, sumoylated at Lys-338 by TRIM38 during the early phase of viral infection, promoting its stability by preventing its relocalization to autophagosomes and subsequent degradation. Desumoylated by SENP2 during the late phase of viral infection. Post-translationally, palmitoylation takes place in the Golgi apparatus and creates a platform for the recruitment of TBK1. As to expression, ubiquitously expressed. Expressed in skin endothelial cells, alveolar type 2 pneumocytes, bronchial epithelium and alveolar macrophages.

Its subcellular location is the endoplasmic reticulum membrane. It localises to the cytoplasm. The protein localises to the perinuclear region. It is found in the endoplasmic reticulum-Golgi intermediate compartment membrane. The protein resides in the golgi apparatus membrane. Its subcellular location is the cytoplasmic vesicle. It localises to the autophagosome membrane. The protein localises to the mitochondrion outer membrane. It is found in the cell membrane. The enzyme catalyses H(+)(in) = H(+)(out). Its activity is regulated as follows. Activated upon binding to the hydrolysis-resistant 2'3'-cG(s)A(s)MP, an analog of cGAMP, in which phosphodiester linkages are replaced by phosphothioate linkages. Specifically inhibited by small-molecule H-151 (N-(4-ethylphenyl)-N'-1H-indol-3-yl-urea), which covalently binds Cys-91 and prevents palmitoylation and subsequent activation of STING1. In contrast to mouse protein, not activated by anticancer molecule 5,6-dimethylxanthenone 4-acetic acid (DMXAA). Inhibited by compound 18 ([(3S,4S)-2-(4-tert-butyl-3-chlorophenyl)-3-(2,3-dihydro-1,4-benzodioxin-6-yl)-7-fluoro-1-oxo-1,2,3,4-tetrahydroisoquinolin-4-yl]acetate), a competitive inhibitor with slow dissociation kinetics and good oral bioavailability. Homooligomerization and ability to promote the production of type I interferons is activated by C53, a small benzothiazinone-like compound that binds to the transmembrane regions. in the area of the putative pore. In contrast, compound C53, directly inhibits the proton channel activity and facilitate MAP1LC3B/LC3B lipidation and autophagosome formation. In terms of biological role, facilitator of innate immune signaling that acts as a sensor of cytosolic DNA from bacteria and viruses and promotes the production of type I interferon (IFN-alpha and IFN-beta). Innate immune response is triggered in response to non-CpG double-stranded DNA from viruses and bacteria delivered to the cytoplasm. Acts by binding cyclic dinucleotides: recognizes and binds cyclic di-GMP (c-di-GMP), a second messenger produced by bacteria, cyclic UMP-AMP (2',3'-cUAMP), and cyclic GMP-AMP (cGAMP), a messenger produced by CGAS in response to DNA virus in the cytosol. Upon binding to c-di-GMP, cUAMP or cGAMP, STING1 oligomerizes, translocates from the endoplasmic reticulum and is phosphorylated by TBK1 on the pLxIS motif, leading to recruitment and subsequent activation of the transcription factor IRF3 to induce expression of type I interferon and exert a potent anti-viral state. Exhibits 2',3' phosphodiester linkage-specific ligand recognition: can bind both 2'-3' linked cGAMP (2'-3'-cGAMP) and 3'-3' linked cGAMP but is preferentially activated by 2'-3' linked cGAMP. The preference for 2'-3'-cGAMP, compared to other linkage isomers is probably due to the ligand itself, whichs adopts an organized free-ligand conformation that resembles the STING1-bound conformation and pays low energy costs in changing into the active conformation. In addition to promote the production of type I interferons, plays a direct role in autophagy. Following cGAMP-binding, STING1 buds from the endoplasmic reticulum into COPII vesicles, which then form the endoplasmic reticulum-Golgi intermediate compartment (ERGIC). The ERGIC serves as the membrane source for WIPI2 recruitment and LC3 lipidation, leading to formation of autophagosomes that target cytosolic DNA or DNA viruses for degradation by the lysosome. Promotes autophagy by acting as a proton channel that directs proton efflux from the Golgi to facilitate MAP1LC3B/LC3B lipidation. The autophagy- and interferon-inducing activities can be uncoupled and autophagy induction is independent of TBK1 phosphorylation. Autophagy is also triggered upon infection by bacteria: following c-di-GMP-binding, which is produced by live Gram-positive bacteria, promotes reticulophagy. May be involved in translocon function, the translocon possibly being able to influence the induction of type I interferons. May be involved in transduction of apoptotic signals via its association with the major histocompatibility complex class II (MHC-II). Functionally, (Microbial infection) Antiviral activity is antagonized by oncoproteins, such as papillomavirus (HPV) protein E7 and adenovirus early E1A protein. Such oncoproteins prevent the ability to sense cytosolic DNA. The protein is Stimulator of interferon genes protein of Homo sapiens (Human).